A 405-amino-acid polypeptide reads, in one-letter code: Magnesium-protoporphyrin IX monomethyl ester [oxidative] cyclase, chloroplastic (405 aa).

A chloroplast-targeting transit peptide spans 1–43 (MATEMALVKPISKFSTSSPIFSNSRYGKFTTVRMSSTSQSTTK).

Belongs to the AcsF family. The cofactor is Fe cation.

It localises to the plastid. The protein localises to the chloroplast. It carries out the reaction Mg-protoporphyrin IX 13-monomethyl ester + 3 NADPH + 3 O2 + 2 H(+) = 3,8-divinyl protochlorophyllide a + 3 NADP(+) + 5 H2O. It functions in the pathway porphyrin-containing compound metabolism; chlorophyll biosynthesis. In terms of biological role, catalyzes the formation of the isocyclic ring in chlorophyll biosynthesis. Mediates the cyclase reaction, which results in the formation of divinylprotochlorophyllide (Pchlide) characteristic of all chlorophylls from magnesium-protoporphyrin IX 13-monomethyl ester (MgPMME). In Gossypium hirsutum (Upland cotton), this protein is Magnesium-protoporphyrin IX monomethyl ester [oxidative] cyclase, chloroplastic (CRD1).